Reading from the N-terminus, the 81-residue chain is D-alanyl carrier protein (81 aa).

One can recognise a Carrier domain in the interval Met-1 to Gln-81. Ser-39 is subject to O-(pantetheine 4'-phosphoryl)serine.

This sequence belongs to the DltC family. Post-translationally, 4'-phosphopantetheine is transferred from CoA to a specific serine of apo-DCP.

It is found in the cytoplasm. It participates in cell wall biogenesis; lipoteichoic acid biosynthesis. In terms of biological role, carrier protein involved in the D-alanylation of lipoteichoic acid (LTA). The loading of thioester-linked D-alanine onto DltC is catalyzed by D-alanine--D-alanyl carrier protein ligase DltA. The DltC-carried D-alanyl group is further transferred to cell membrane phosphatidylglycerol (PG) by forming an ester bond, probably catalyzed by DltD. D-alanylation of LTA plays an important role in modulating the properties of the cell wall in Gram-positive bacteria, influencing the net charge of the cell wall. The polypeptide is D-alanyl carrier protein (Lacticaseibacillus rhamnosus (Lactobacillus rhamnosus)).